We begin with the raw amino-acid sequence, 398 residues long: Cysteine protease ATG4A (398 aa).

Cys-77 serves as the catalytic Nucleophile. Catalysis depends on residues Asp-279 and His-281. The short motif at 393-396 (FEIL) is the LIR element.

This sequence belongs to the peptidase C54 family. In terms of assembly, interacts with ATG9A; the interaction is direct.

The protein localises to the cytoplasm. It catalyses the reaction [protein]-C-terminal L-amino acid-glycyl-phosphatidylethanolamide + H2O = [protein]-C-terminal L-amino acid-glycine + a 1,2-diacyl-sn-glycero-3-phosphoethanolamine. With respect to regulation, inhibited by N-ethylmaleimide. Redox-regulated during autophagy since reducing conditions activate ATG4A whereas an oxidizing environment such as the presence of H(2)O(2) inhibits its activity. Its function is as follows. Cysteine protease that plays a key role in autophagy by mediating both proteolytic activation and delipidation of ATG8 family proteins. The protease activity is required for proteolytic activation of ATG8 family proteins: cleaves the C-terminal amino acid of ATG8 proteins to reveal a C-terminal glycine. Exposure of the glycine at the C-terminus is essential for ATG8 proteins conjugation to phosphatidylethanolamine (PE) and insertion to membranes, which is necessary for autophagy. Preferred substrate is GABARAPL2 followed by MAP1LC3A and GABARAP. Protease activity is also required to counteract formation of high-molecular weight conjugates of ATG8 proteins (ATG8ylation): acts as a deubiquitinating-like enzyme that removes ATG8 conjugated to other proteins, such as ATG3. In addition to the protease activity, also mediates delipidation of ATG8 family proteins. Catalyzes delipidation of PE-conjugated forms of ATG8 proteins during macroautophagy. Compared to ATG4B, the major protein for proteolytic activation of ATG8 proteins, shows weaker ability to cleave the C-terminal amino acid of ATG8 proteins, while it displays stronger delipidation activity. Involved in phagophore growth during mitophagy independently of its protease activity and of ATG8 proteins: acts by regulating ATG9A trafficking to mitochondria and promoting phagophore-endoplasmic reticulum contacts during the lipid transfer phase of mitophagy. The chain is Cysteine protease ATG4A from Homo sapiens (Human).